The primary structure comprises 870 residues: Pre-mRNA-processing factor 40 homolog B (870 aa).

WW domains are found at residues 92-125 (GPPR…KPSV) and 133-166 (LLSQ…RPKD). Positions 146 to 277 (TGKPYYYNNQ…RSGLSWSNRE (132 aa)) are disordered. Lys-148 bears the N6-acetyllysine mark. Lys-175 is covalently cross-linked (Glycyl lysine isopeptide (Lys-Gly) (interchain with G-Cter in SUMO2)). Over residues 182-191 (QQTQQLQTLQ) the composition is skewed to low complexity. Residues 192 to 211 (PQPPQPQPDPPPIPPGPIPV) are compositionally biased toward pro residues. FF domains are found at residues 276 to 330 (REKA…YKAQ), 340 to 397 (RLRA…VLFF), 410 to 470 (RRRN…HIRA), 490 to 550 (QRKN…YVEE), 554 to 610 (RFHD…LLEK), and 625 to 682 (RMRR…FLQV). The stretch at 604 to 640 (FNSLLEKAEARETEREKEEARRMRRREAAFRSMLRQA) forms a coiled coil. The tract at residues 690–870 (HLHTKGRKHG…TLLQQLDDHQ (181 aa)) is disordered. Over residues 691-711 (LHTKGRKHGRKGKKHHRKRSH) the composition is skewed to basic residues. 2 stretches are compositionally biased toward low complexity: residues 739-756 (SESG…ESGG) and 764-774 (SPSSHLLLGSD). Phosphoserine is present on Ser-764. Over residues 778–794 (RKTKKPKKKTKKRRHKS) the composition is skewed to basic residues. A compositionally biased stretch (basic and acidic residues) spans 804 to 824 (EDKAGKESEDREQEQDREPRQ). Ser-831 bears the Phosphoserine mark. A Glycyl lysine isopeptide (Lys-Gly) (interchain with G-Cter in SUMO2) cross-link involves residue Lys-837. Position 851 is a phosphoserine (Ser-851).

It belongs to the PRPF40 family. In terms of assembly, interacts with the N-terminus of HD.

It localises to the nucleus speckle. May be involved in pre-mRNA splicing. In Mus musculus (Mouse), this protein is Pre-mRNA-processing factor 40 homolog B (Prpf40b).